We begin with the raw amino-acid sequence, 491 residues long: Glutamate--tRNA ligase (491 aa).

A 'HIGH' region motif is present at residues 14 to 24 (PSPTGSPHVGL). Zn(2+) contacts are provided by Cys-111, Cys-113, Cys-136, and Asp-138. A 'KMSKS' region motif is present at residues 257-261 (KLSKR). Position 260 (Lys-260) interacts with ATP.

It belongs to the class-I aminoacyl-tRNA synthetase family. Glutamate--tRNA ligase type 1 subfamily. In terms of assembly, monomer. Zn(2+) serves as cofactor.

It localises to the cytoplasm. It carries out the reaction tRNA(Glu) + L-glutamate + ATP = L-glutamyl-tRNA(Glu) + AMP + diphosphate. Functionally, catalyzes the attachment of glutamate to tRNA(Glu) in a two-step reaction: glutamate is first activated by ATP to form Glu-AMP and then transferred to the acceptor end of tRNA(Glu). The protein is Glutamate--tRNA ligase of Nocardioides sp. (strain ATCC BAA-499 / JS614).